The following is a 363-amino-acid chain: Apelin receptor B (363 aa).

Residues 1–38 (MESEGFSATTEQYEYYDYANETGLQPCDETDWDFSYSL) are Extracellular-facing. N-linked (GlcNAc...) asparagine glycosylation is present at N20. Cystine bridges form between C27–C287 and C109–C186. A helical transmembrane segment spans residues 39-59 (LPVFYMIVFVLGLSGNGVVIF). At 60–77 (TVWKAKPKRRSADTYIGN) the chain is on the cytoplasmic side. The chain crosses the membrane as a helical span at residues 78-98 (LALADLAFVVTLPLWATYTAL). Residues 99 to 111 (GFHWPFGSALCKL) lie on the Extracellular side of the membrane. A helical transmembrane segment spans residues 112–132 (SSYLVLLNMFASVFCLTCLSF). Residues 133–152 (DRYLAIVHSLSSAKLRSRSS) lie on the Cytoplasmic side of the membrane. A helical membrane pass occupies residues 153–173 (ILVSLAVIWLFSGLLALPSLI). Over 174–200 (LRDTRVEGNNTICDLDFSGVSSKENEN) the chain is Extracellular. Residue N182 is glycosylated (N-linked (GlcNAc...) asparagine). The helical transmembrane segment at 201 to 221 (FWIGGLSILTTVPGFLLPLLL) threads the bilayer. Residues 222–249 (MTIFYCFIGGKVTMHFQNLKKEEQKKKR) are Cytoplasmic-facing. The chain crosses the membrane as a helical span at residues 250–270 (LLKIIITLVVVFAICWLPFHI). Over 271-297 (LKTIHFLDLMGFLELSCSAQNIIVSLH) the chain is Extracellular. Residues 298–318 (PYATCLAYVNSCLNPFLYAFF) traverse the membrane as a helical segment. The Cytoplasmic portion of the chain corresponds to 319-363 (DLRFRSQCFFFFGFKKVLQGHLSNTSSSLSAQTQKSEIHSLATKV).

The protein belongs to the G-protein coupled receptor 1 family. Expressed in all blood vessels including the posterior cardinal vein, intersomitic veins and the vitelline vein network.

Its subcellular location is the cell membrane. In terms of biological role, g protein-coupled receptor for peptide hormones apelin (apln) and apelin receptor early endogenous ligand (apela), that plays a role in the regulation of normal cardiovascular function and fluid homeostasis. When acting as apelin receptor, activates both G(i) protein pathway that inhibits adenylate cyclase activity, and the beta-arrestin pathway that promotes internalization of the receptor. Also functions as mechanoreceptor that is activated by pathological stimuli in a G-protein-independent fashion to induce beta-arrestin signaling, hence eliciting cardiac hypertrophy. However, the presence of apelin ligand blunts cardiac hypertrophic induction from APLNR/APJ on response to pathological stimuli. Plays a key role in early development such as gastrulation, blood vessels formation and heart morphogenesis by acting as a receptor for apela hormone, promoting endoderm and mesendoderm cell migration and regulating the migration of cells fated to become myocardial progenitors, respectively. Promotes angioblast migration toward the embryonic midline, i.e. the position of the future vessel formation, during vasculogenesis. May promote sinus venosus (SV)-derived endothelial cells migration into the developing heart to promote coronary blood vessel development. Required for cardiovascular development, particularly for intersomitic vein angiogenesis by acting as a receptor for apln hormone. Also plays a role in various processes in adults such as regulation of blood vessel formation, blood pressure, heart contractility, and heart failure. Acts upstream of the i/o type of G-alpha proteins in the differentiation of endothelium, erythroid cells, myeloid cells and cardiomyocytes. The chain is Apelin receptor B (aplnr-b) from Xenopus laevis (African clawed frog).